The chain runs to 501 residues: Alpha-internexin (501 aa).

The tract at residues 1 to 87 (MSFGSEHYLC…SQAAARTNEY (87 aa)) is head. Serine 72 is subject to Phosphoserine. Residues 88–129 (KIIRTNEKEQLQGLNDRFAVFIEKVHQLETQNRALEAELAAL) are coil 1A. The IF rod domain occupies 94-407 (EKEQLQGLND…KLLEGEETRF (314 aa)). The interval 130 to 142 (RQRHAEPSRVGEL) is linker 1. The segment at 143–238 (FQRELRELRA…QVHDEEVAEL (96 aa)) is coil 1B. Serine 219 is modified (phosphoserine). The segment at 239–262 (LATLQASSQAAAEVDVAVAKPDLT) is linker 2. Residues 263–408 (SALREIRAQY…LLEGEETRFS (146 aa)) form a coil 2 region. Lysine 290 carries the post-translational modification N6-acetyllysine. A phosphoserine mark is found at serine 335 and serine 498. Residues 409 to 501 (TGGLSISGLN…EESTSSSQKM (93 aa)) are tail. The tract at residues 441 to 501 (SAGLSLKKEE…EESTSSSQKM (61 aa)) is disordered. Positions 488-501 (KSATEESTSSSQKM) are enriched in polar residues.

This sequence belongs to the intermediate filament family. Forms homodimers (in vitro). Forms heterodimers with NEFL, NEFM or NEFH (in vitro). Post-translationally, O-glycosylated.

In terms of biological role, class-IV neuronal intermediate filament that is able to self-assemble. It is involved in the morphogenesis of neurons. It may form an independent structural network without the involvement of other neurofilaments or it may cooperate with NEFL to form the filamentous backbone to which NEFM and NEFH attach to form the cross-bridges. May also cooperate with the neuronal intermediate filament protein PRPH to form filamentous networks. In Mus musculus (Mouse), this protein is Alpha-internexin (Ina).